The primary structure comprises 313 residues: tRNA-cytidine(32) 2-sulfurtransferase (313 aa).

Residues 47–52 (SGGKDS) carry the PP-loop motif motif. 3 residues coordinate [4Fe-4S] cluster: Cys122, Cys125, and Cys213.

The protein belongs to the TtcA family. Homodimer. It depends on Mg(2+) as a cofactor. [4Fe-4S] cluster serves as cofactor.

The protein resides in the cytoplasm. It catalyses the reaction cytidine(32) in tRNA + S-sulfanyl-L-cysteinyl-[cysteine desulfurase] + AH2 + ATP = 2-thiocytidine(32) in tRNA + L-cysteinyl-[cysteine desulfurase] + A + AMP + diphosphate + H(+). It participates in tRNA modification. In terms of biological role, catalyzes the ATP-dependent 2-thiolation of cytidine in position 32 of tRNA, to form 2-thiocytidine (s(2)C32). The sulfur atoms are provided by the cysteine/cysteine desulfurase (IscS) system. In Yersinia pseudotuberculosis serotype IB (strain PB1/+), this protein is tRNA-cytidine(32) 2-sulfurtransferase.